A 116-amino-acid chain; its full sequence is Putative pterin-4-alpha-carbinolamine dehydratase (116 aa).

This sequence belongs to the pterin-4-alpha-carbinolamine dehydratase family.

The enzyme catalyses (4aS,6R)-4a-hydroxy-L-erythro-5,6,7,8-tetrahydrobiopterin = (6R)-L-erythro-6,7-dihydrobiopterin + H2O. This chain is Putative pterin-4-alpha-carbinolamine dehydratase, found in Stenotrophomonas maltophilia (strain K279a).